The following is a 245-amino-acid chain: 8-amino-3,8-dideoxy-manno-octulosonate cytidylyltransferase (245 aa).

It belongs to the KdsB family.

The protein resides in the cytoplasm. It carries out the reaction 8-amino-3,8-dideoxy-alpha-D-manno-octulosonate + CTP = CMP-8-amino-3,8-dideoxy-alpha-D-manno-oct-2-ulosonate + diphosphate. It functions in the pathway bacterial outer membrane biogenesis; lipopolysaccharide biosynthesis. In terms of biological role, activates KDO8N (a required 8-carbon sugar) for incorporation into bacterial lipopolysaccharide in the Shewanella genus. In Shewanella loihica (strain ATCC BAA-1088 / PV-4), this protein is 8-amino-3,8-dideoxy-manno-octulosonate cytidylyltransferase.